The sequence spans 434 residues: Solute carrier RCH1 (434 aa).

The Cytoplasmic segment spans residues 1-15 (MKTQYSLIRKIWAHS). The helical transmembrane segment at 16-36 (VTEFLKSQWFFICLAILIVIA) threads the bilayer. Over 37-50 (RFAPNFARDGGLIK) the chain is Extracellular. A helical transmembrane segment spans residues 51-71 (GQYSIGYGCVAWIFLQSGLGM). At 72–87 (KSRSLMANMLNWRAHA) the chain is on the cytoplasmic side. The helical transmembrane segment at 88–108 (TILVLSFLITSSIVYGFCCAV) threads the bilayer. The Extracellular portion of the chain corresponds to 109 to 118 (KAANDPKIDD). A helical transmembrane segment spans residues 119 to 139 (WVLIGLILTATCPTTVASNVI). The Cytoplasmic portion of the chain corresponds to 140-149 (MTTNAGGNSL). A helical transmembrane segment spans residues 150-170 (LCVCEVFIGNLLGAFITPALV). Over 171–199 (QMFTNRAPFAYGNPATGNGIGALYGRVMK) the chain is Extracellular. The helical transmembrane segment at 200–220 (QVGLSVFVPLFVGQVIQNCFP) threads the bilayer. The Cytoplasmic segment spans residues 221-234 (KGTAYYLGFLKKYH). The chain crosses the membrane as a helical span at residues 235-255 (IKIGSYMLLLIMFSSFSTAFY). The Extracellular portion of the chain corresponds to 256–264 (QDAFTSVSH). The helical transmembrane segment at 265–285 (VCIIFLCFFNLGIYIFFTGLS) threads the bilayer. Over 286–327 (YLCARPWFILKLFPHEPIEGKSTRLYRYSYNIFRPFYYSKED) the chain is Cytoplasmic. Residues 328-348 (AICIMFCGPAKTAALGVSLIT) form a helical membrane-spanning segment. The Extracellular segment spans residues 349-362 (SQYGDKKEHLGKLL). Residues 363-383 (VPLVLYQVEQVMTANFFVSLF) traverse the membrane as a helical segment. The Cytoplasmic segment spans residues 384-434 (KRWIQKDAQADGSESSCANENEEVDLEKIISIGTGENQSVLSNNVPYTQPR). A Phosphoserine modification is found at serine 425.

The protein belongs to the bile acid:sodium symporter (BASS) (TC 2.A.28) family.

The protein localises to the cell membrane. It is found in the bud neck. Its function is as follows. Solute carrier protein that negatively regulates the cytosolic calcium homeostasis in response to high levels of extracellular calcium. This Saccharomyces cerevisiae (strain ATCC 204508 / S288c) (Baker's yeast) protein is Solute carrier RCH1.